Reading from the N-terminus, the 216-residue chain is Probable GTP-binding protein EngB (216 aa).

Residues 30 to 204 (SGLEVAFAGR…QMVLAGWLDL (175 aa)) enclose the EngB-type G domain. Residues 38 to 45 (GRSNAGKS), 64 to 68 (GRTQL), 82 to 85 (DLPG), 149 to 152 (TKAD), and 182 to 185 (LFSA) contribute to the GTP site. Positions 45 and 66 each coordinate Mg(2+).

It belongs to the TRAFAC class TrmE-Era-EngA-EngB-Septin-like GTPase superfamily. EngB GTPase family. The cofactor is Mg(2+).

Necessary for normal cell division and for the maintenance of normal septation. This Ectopseudomonas mendocina (strain ymp) (Pseudomonas mendocina) protein is Probable GTP-binding protein EngB.